The sequence spans 36 residues: Serine protease inhibitor 2 (36 aa).

The region spanning Glu-1–Gln-36 is the Pacifastin domain. Disulfide bonds link Cys-4/Cys-19, Cys-14/Cys-34, and Cys-17/Cys-29.

The protein belongs to the protease inhibitor I19 family. In terms of tissue distribution, expressed in hemolymph.

The protein resides in the secreted. In terms of biological role, probable serine protease inhibitor. The chain is Serine protease inhibitor 2 from Melanoplus sanguinipes (Migratory grasshopper).